Here is a 542-residue protein sequence, read N- to C-terminus: MSLLHCENSCGSSQSESDCCAAMAASSCGTAAKDDSVSGTASTVTLSSSFMEEIQGYDVEFDPPLESKYECPICLMALREAVQTPCGHRFCKACIIKSIRDAGHKCPVDNEILLENQLFPDNFAKREILSLMVKCPNEGCLHKMELRHLEEHQAHCEFALMSCPQCQRPFQKCHLNIHILKECPRRQVPCENCAVSMAFEDKEIHEQNCPLANVICEYCNTMLIREQMPNHYDLDCPTAPVPCTFSAFGCHEKMQRNHLARHLQENTQSHMRMMAQAVQTLSLAVAPVPQCTMPLYDSVPPTRPSSGRHSEVHNFQETIQQLEGRLVRQDHQIRELTAKMETQSMYVNELKRTIRTLEDKVAEIEAQQCNGIYIWKIGNFGMHLKSQEEEKPVVIHSPGFYTGKPGYKLCMRLHLQLPSAQRCANYISLFVHTMQGEYDSHLPWPFQGTIRLTILDQSEAAVRQNHEEIMDAKPELLAFQRPTIPRNPKGFGYVTFMHLEALRQRTFIKDDTLLVRCEVSTRFDMGSLRREGFQPRSTDSGI.

An interaction with TAX1BP1 region spans residues 1–374; the sequence is MSLLHCENSC…EAQQCNGIYI (374 aa). The segment at 71–110 adopts an RING-type; degenerate zinc-finger fold; the sequence is CPICLMALREAVQTPCGHRFCKACIIKSIRDAGHKCPVDN. Lysine 125 participates in a covalent cross-link: Glycyl lysine isopeptide (Lys-Gly) (interchain with G-Cter in SUMO); alternate. Residue lysine 125 forms a Glycyl lysine isopeptide (Lys-Gly) (interchain with G-Cter in ubiquitin); alternate linkage. Lysine 143 participates in a covalent cross-link: Glycyl lysine isopeptide (Lys-Gly) (interchain with G-Cter in SUMO). 2 consecutive TRAF-type zinc fingers follow at residues 151 to 203 and 204 to 260; these read EHQA…EDKE and IHEQ…NHLA. A coiled-coil region spans residues 310 to 368; it reads SEVHNFQETIQQLEGRLVRQDHQIRELTAKMETQSMYVNELKRTIRTLEDKVAEIEAQQ. A Glycyl lysine isopeptide (Lys-Gly) (interchain with G-Cter in ubiquitin) cross-link involves residue lysine 339. Positions 370-519 constitute an MATH domain; that stretch reads NGIYIWKIGN…DDTLLVRCEV (150 aa). Positions 375–542 are interaction with TANK; it reads WKIGNFGMHL…FQPRSTDSGI (168 aa). Residue lysine 473 forms a Glycyl lysine isopeptide (Lys-Gly) (interchain with G-Cter in SUMO) linkage.

Belongs to the TNF receptor-associated factor family. A subfamily. As to quaternary structure, homotrimer. Homooligomer. N-terminal region is dimeric while C-terminal region is trimeric; maybe providing a mode of oligomerization. Upon IL1B treatment, forms a complex with PELI1, IRAK1, IRAK4 and MYD88; this complex recruits MAP3K7/TAK1, TAB1 and TAB2 to mediate NF-kappa-B activation. Direct binding of SMAD6 to PELI1 prevents the complex formation and hence negatively regulates IL1R-TLR signaling and eventually NF-kappa-B-mediated gene expression. Binds to TNFRSF5/CD40 and TNFRSF11A/RANK. Associates with NGFR, TNFRSF17, IRAK2, IRAK3, RIPK2, MAP3K1, MAP3K5, MAP3K14, CSK, TRAF, TRAF-interacting protein TRIP and TNF receptor associated protein TDP2. Interacts with IL17R. Interacts with SQSTM1 bridging NTRK1 and NGFR. Forms a ternary complex with SQSTM1 and PRKCZ. Interacts with PELI2 and PELI3. Binds UBE2V1. Interacts with TAX1BP1; this interaction mediates deubiquitination of TRAF6 and inhibition of NF-kappa-B activation. Interacts with ZNF675. Interacts with ARRB1 and ARRB2. Interacts with MAP3K7 and TAB1/MAP3K7IP1; during IL-1 signaling. Interacts with UBE2N. Interacts with TGFBR1, HDAC1 and RANGAP1. Interacts with AKT1, AKT2 and AKT3. Interacts (via TRAF domains) with NUMBL (via C-terminal). Interacts with RBCK1. Interacts with LIMD1 (via LIM domains). Interacts with RSAD2/viperin. Interacts (via C-terminus) with EIF2AK2/PKR (via the kinase catalytic domain). Interacts with ZFAND5. Interacts with IL1RL1. Interacts with TRAFD1. Interacts with AJUBA. Interacts with MAVS/IPS1. Interacts (via TRAF domains) with DYNC2I2 (via WD domains). Interacts with IFIT3 (via N-terminus). Interacts with TICAM2. Interacts with CARD14. Interacts with CD40 and MAP3K8; the interaction is required for ERK activation. Interacts with TICAM1 and this interaction is enhanced in the presence of WDFY1. Interacts with TANK; this interaction increases in response to DNA damage. Interacts with USP10; this interaction increases in response to DNA damage. Interacts with ZC3H12A; this interaction increases in response to DNA damage and is stimulated by TANK. Interacts with WDFY3. Interacts with TRIM13. Interacts with GPS2. Interacts (via C-terminus) with SASH1. Interacts with LRRC19. Interacts with IL17RA and TRAF3IP2. Interacts with TOMM70. Interacts with AMBRA1; interaction is required to mediate 'Lys-63'-linked ubiquitination of ULK1. Interacts with CRBN; this interaction inhibits TLR4-mediated signaling by preventing TRAF6-mediated ubiquitination of ECSIT. Post-translationally, sumoylated on Lys-125, Lys-143 and Lys-473 with SUMO1. Polyubiquitinated on Lys-125 by TRAF3IP2; after cell stimulation with IL17A. Polyubiquitinated on Lys-125; after cell stimulation with IL1B or TGFB. This ligand-induced cell stimulation leads to dimerization/oligomerization of TRAF6 molecules, followed by auto-ubiquitination which involves UBE2N and UBE2V1 and leads to TRAF6 activation. This 'Lys-63' site-specific poly-ubiquitination appears to be associated with the activation of signaling molecules. Endogenous autoubiquitination occurs only for the cytoplasmic form. Deubiquitinated by USP10 in a TANK-dependent manner, leading to the negative regulation of NF-kappa-B signaling upon DNA damage. LRRC19 induces 'Lys-63' ubiquitination. Ubiquitinated at Lys-339 by the SCF(FBXL2) complex, leading to its degradation by the proteasome.

It localises to the cytoplasm. The protein localises to the cell cortex. Its subcellular location is the nucleus. It is found in the lipid droplet. The catalysed reaction is S-ubiquitinyl-[E2 ubiquitin-conjugating enzyme]-L-cysteine + [acceptor protein]-L-lysine = [E2 ubiquitin-conjugating enzyme]-L-cysteine + N(6)-ubiquitinyl-[acceptor protein]-L-lysine.. The protein operates within protein modification; protein ubiquitination. Its function is as follows. E3 ubiquitin ligase that, together with UBE2N and UBE2V1, mediates the synthesis of 'Lys-63'-linked-polyubiquitin chains conjugated to proteins, such as ECSIT, IKBKG, IRAK1, AKT1 and AKT2. Also mediates ubiquitination of free/unanchored polyubiquitin chain that leads to MAP3K7 activation. Leads to the activation of NF-kappa-B and JUN. Seems to also play a role in dendritic cells (DCs) maturation and/or activation. Represses c-Myb-mediated transactivation, in B-lymphocytes. Adapter protein that seems to play a role in signal transduction initiated via TNF receptor, IL-1 receptor and IL-17 receptor. Regulates osteoclast differentiation by mediating the activation of adapter protein complex 1 (AP-1) and NF-kappa-B, in response to RANK-L stimulation. Together with MAP3K8, mediates CD40 signals that activate ERK in B-cells and macrophages, and thus may play a role in the regulation of immunoglobulin production. Acts as a regulator of the JNK and NF-kappa-B signaling pathways by initiating assembly of heterotypic 'Lys-63'-/'Lys-48'-linked branched ubiquitin chains that are then recognized by TAB2: TRAF6 catalyzes initial 'Lys-63'-linked-polyubiquitin chains that are then branched via 'Lys-48'-linked polyubiquitin by HUWE1. 'Lys-63'-/'Lys-48'-linked branched ubiquitin chains protect 'Lys-63'-linkages from CYLD deubiquitination. Also participates in the TCR signaling by ubiquitinating LAT. In Bos taurus (Bovine), this protein is TNF receptor-associated factor 6 (TRAF6).